Here is an 81-residue protein sequence, read N- to C-terminus: Acyl carrier protein (81 aa).

One can recognise a Carrier domain in the interval 4-79 (DEVYSRVRKI…DAVNYILSKK (76 aa)). Ser39 is subject to O-(pantetheine 4'-phosphoryl)serine.

This sequence belongs to the acyl carrier protein (ACP) family. In terms of processing, 4'-phosphopantetheine is transferred from CoA to a specific serine of apo-ACP by AcpS. This modification is essential for activity because fatty acids are bound in thioester linkage to the sulfhydryl of the prosthetic group.

It localises to the cytoplasm. The protein operates within lipid metabolism; fatty acid biosynthesis. Functionally, carrier of the growing fatty acid chain in fatty acid biosynthesis. The polypeptide is Acyl carrier protein (Synechococcus sp. (strain JA-3-3Ab) (Cyanobacteria bacterium Yellowstone A-Prime)).